The sequence spans 261 residues: 5'-nucleotidase SurE (261 aa).

A divalent metal cation is bound by residues D8, D9, S40, and N94.

The protein belongs to the SurE nucleotidase family. A divalent metal cation serves as cofactor.

It localises to the cytoplasm. The enzyme catalyses a ribonucleoside 5'-phosphate + H2O = a ribonucleoside + phosphate. Its function is as follows. Nucleotidase that shows phosphatase activity on nucleoside 5'-monophosphates. The chain is 5'-nucleotidase SurE from Anaplasma marginale (strain Florida).